A 147-amino-acid chain; its full sequence is MAKLLVLHGPNLNLLGTREPEVYGHTTLADIDQALASQASAAGHAVESLQSNAEHVLVDRVQAARDDGTAFILINPAAFTHTSVALRDALAAVAVPFIEIHLSNPHTREPFRQHSYFSDKAVGVVCGFGADSYRYAMDAALLRVSAT.

The active-site Proton acceptor is Y23. Positions 75, 81, and 88 each coordinate substrate. The Proton donor role is filled by H101. Substrate-binding positions include 102–103 and R112; that span reads LS.

Belongs to the type-II 3-dehydroquinase family. Homododecamer.

It carries out the reaction 3-dehydroquinate = 3-dehydroshikimate + H2O. It functions in the pathway metabolic intermediate biosynthesis; chorismate biosynthesis; chorismate from D-erythrose 4-phosphate and phosphoenolpyruvate: step 3/7. Its function is as follows. Catalyzes a trans-dehydration via an enolate intermediate. In Stenotrophomonas maltophilia (strain K279a), this protein is 3-dehydroquinate dehydratase.